A 77-amino-acid polypeptide reads, in one-letter code: Dermaseptin-B9 (77 aa).

The signal sequence occupies residues 1-22 (MAFLKKSLFLVLFLGLVSLSVC). 2 propeptides span residues 23–43 (EEEKRENEDEEEQEDDEQSEE) and 76–77 (EQ).

The protein belongs to the frog skin active peptide (FSAP) family. Dermaseptin subfamily. In terms of tissue distribution, expressed by the skin glands.

The protein resides in the secreted. Has antimicrobial activity. Exhibits a bactericidal activity towards several species of mollicutes, firmicutes and gracilicutes. This peptide is membranotropic and it efficiently depolarizes the plasma membrane. In Phyllomedusa bicolor (Two-colored leaf frog), this protein is Dermaseptin-B9 (DRG3).